Consider the following 463-residue polypeptide: A-type ATP synthase subunit B (463 aa).

Belongs to the ATPase alpha/beta chains family. Has multiple subunits with at least A(3), B(3), C, D, E, F, H, I and proteolipid K(x).

The protein localises to the cell membrane. Component of the A-type ATP synthase that produces ATP from ADP in the presence of a proton gradient across the membrane. The B chain is a regulatory subunit. The chain is A-type ATP synthase subunit B from Methanothrix thermoacetophila (strain DSM 6194 / JCM 14653 / NBRC 101360 / PT) (Methanosaeta thermophila).